Here is a 485-residue protein sequence, read N- to C-terminus: Protein hunchback (485 aa).

The tract at residues Thr1 to Lys77 is disordered. Polar residues predominate over residues Gln16 to Asp37. Positions Ala59–Asp72 are enriched in acidic residues. 4 consecutive C2H2-type zinc fingers follow at residues Tyr87–His109, Leu116–His138, Phe144–His166, and Tyr172–His196. Disordered stretches follow at residues Lys229–Ser270, Asn318–His361, and Pro398–Ser422. The segment covering Asn257–Ser270 has biased composition (polar residues). Over residues Asn325–Glu335 the composition is skewed to acidic residues. A compositionally biased stretch (polar residues) spans Asp345–Gln358. Over residues Gln402–Thr416 the composition is skewed to low complexity. 2 consecutive C2H2-type zinc fingers follow at residues Tyr432–His454 and Phe460–His484.

The protein belongs to the hunchback C2H2-type zinc-finger protein family.

Its subcellular location is the nucleus. Gap class segmentation protein that controls development of head structures. The polypeptide is Protein hunchback (hb) (Clogmia albipunctata (Mothmidge)).